The primary structure comprises 270 residues: Putative carboxymethylenebutenolidase (270 aa).

Catalysis depends on residues Cys-147, Asp-204, and His-236.

It belongs to the dienelactone hydrolase family.

The enzyme catalyses 2-(5-oxo-2,5-dihydrofuran-2-ylidene)acetate + H2O = 4-oxohex-2-enedioate + H(+). This Salmonella typhi protein is Putative carboxymethylenebutenolidase (ysgA).